A 128-amino-acid chain; its full sequence is Sm-like protein LSM1B (128 aa).

Positions 10–85 (YLSTSLASYL…VVLIGELDTE (76 aa)) constitute a Sm domain.

The protein belongs to the snRNP Sm proteins family. In terms of assembly, component of the heptameric LSM1-LSM7 complex that forms a seven-membered ring structure with a donut shape. The LSM subunits are arranged in the order LSM1, LSM2, LSM3, LSM6, LSM5, LSM7 and LSM4. LSM1B subunit interacts only with its two neighboring subunits, LSM2 and LSM4. In terms of tissue distribution, expressed in roots, leaves, stems, flowers and siliques.

The protein localises to the cytoplasm. It is found in the P-body. In terms of biological role, component of the cytoplasmic LSM1-LSM7 complex which is involved in mRNA degradation by promoting decapping and leading to accurate 5'-3' mRNA decay. LSM1A and LSM1B are essential for the formation of the cytoplasmic LSM1-LSM7 complex which regulates developmental gene expression by the decapping of specific development-related transcripts. Required for P-body formation during heat stress. This chain is Sm-like protein LSM1B, found in Arabidopsis thaliana (Mouse-ear cress).